The sequence spans 348 residues: Papaya proteinase 4 (348 aa).

The N-terminal stretch at 1–18 is a signal peptide; it reads MAIICSFSKLLFVAICLF. Positions 19–132 are cleaved as a propeptide — activation peptide; the sequence is GHMSLSYCDF…EEFVNEDIVD (114 aa). Disulfide bonds link cysteine 154–cysteine 195, cysteine 188–cysteine 227, and cysteine 285–cysteine 336. Cysteine 157 is a catalytic residue. Active-site residues include histidine 291 and asparagine 311.

It belongs to the peptidase C1 family.

The enzyme catalyses Preferential cleavage: Gly-|-Xaa, in proteins and in small molecule substrates.. Its activity is regulated as follows. Not inhibited by cystatin. Functionally, thiol protease with a substrate specificity very different from the other thiol proteases. The polypeptide is Papaya proteinase 4 (Carica papaya (Papaya)).